Reading from the N-terminus, the 431-residue chain is Serine/threonine-protein kinase Sgk1 (431 aa).

Residues 58-93 (LNLTPPQDPELMNSNPSPPPSPSQQINLGPSSNPSA) form a disordered region. A compositionally biased stretch (polar residues) spans 81–93 (QQINLGPSSNPSA). Positions 98–355 (FHFLKVIGKG…FTEIKNHVFF (258 aa)) constitute a Protein kinase domain. ATP-binding positions include 104 to 112 (IGKGSFGKV) and K127. D222 serves as the catalytic Proton acceptor. One can recognise an AGC-kinase C-terminal domain in the interval 356 to 431 (SPINWDDLNA…SYAPSMDSYL (76 aa)).

The protein belongs to the protein kinase superfamily. AGC Ser/Thr protein kinase family.

The protein resides in the cytoplasm. The protein localises to the nucleus. Its subcellular location is the endoplasmic reticulum. The enzyme catalyses L-seryl-[protein] + ATP = O-phospho-L-seryl-[protein] + ADP + H(+). It carries out the reaction L-threonyl-[protein] + ATP = O-phospho-L-threonyl-[protein] + ADP + H(+). In terms of biological role, protein kinase that may play an important role in cellular stress response. May be involved in the regulation of processes such as cell survival, neuronal excitability and renal sodium excretion. The polypeptide is Serine/threonine-protein kinase Sgk1 (sgk1) (Fundulus heteroclitus (Killifish)).